The primary structure comprises 449 residues: Probable glycine dehydrogenase (decarboxylating) subunit 1 (449 aa).

It belongs to the GcvP family. N-terminal subunit subfamily. In terms of assembly, the glycine cleavage system is composed of four proteins: P, T, L and H. In this organism, the P 'protein' is a heterodimer of two subunits.

It catalyses the reaction N(6)-[(R)-lipoyl]-L-lysyl-[glycine-cleavage complex H protein] + glycine + H(+) = N(6)-[(R)-S(8)-aminomethyldihydrolipoyl]-L-lysyl-[glycine-cleavage complex H protein] + CO2. In terms of biological role, the glycine cleavage system catalyzes the degradation of glycine. The P protein binds the alpha-amino group of glycine through its pyridoxal phosphate cofactor; CO(2) is released and the remaining methylamine moiety is then transferred to the lipoamide cofactor of the H protein. In Pyrococcus horikoshii (strain ATCC 700860 / DSM 12428 / JCM 9974 / NBRC 100139 / OT-3), this protein is Probable glycine dehydrogenase (decarboxylating) subunit 1.